Reading from the N-terminus, the 99-residue chain is Plastocyanin (99 aa).

The region spanning L1 to N99 is the Plastocyanin-like domain. Cu cation is bound by residues H37, C84, H87, and M92.

It belongs to the plastocyanin family. It depends on Cu(2+) as a cofactor.

It is found in the plastid. It localises to the chloroplast thylakoid membrane. Its function is as follows. Participates in electron transfer between P700 and the cytochrome b6-f complex in photosystem I. The polypeptide is Plastocyanin (PETE) (Solanum tuberosum (Potato)).